The primary structure comprises 953 residues: Coatomer subunit beta (953 aa).

N-acetylthreonine is present on T2. HEAT repeat units lie at residues 96-131, 132-168, 240-276, 277-314, 316-353, and 396-433; these read HEMILVCDAYRKDLQHPNEFIRGSTLRFLCKLKEAE, LLEPLMPAIRACLEHRHSYVRRNAVLAIYTIYRNFEH, SERARFIRCIYNLLQSSSPAVKYEAAGTLVTLSSAPT, AIKAAAQCYIDLIIKESDNNVKLIVLDRLIELKEHPAH, RVLQDLVMDILRVLSTPDLEVRKKTLQLALDLVSSRNV, and DMAANVIPVLMEFLSDNNEAAAADVLEFVREAIQRFDN. K494 is subject to N6-acetyllysine.

Oligomeric complex that consists of at least the alpha, beta, beta', gamma, delta, epsilon and zeta subunits. Interacts (via C-terminus) with HIV-1 Nef; the interaction is direct. Interacts with CAPN8 and PRKCE. Interacts with SCYL1. Interacts with COPG1. Interacts with ARF1 (myristoylated); this interaction is required for binding of COPB1 to Golgi membranes. Interacts (via trunk domain) with ARF1 (via switch I region); the interaction is direct. Interacts with KCNK2 (via N-terminus); this interaction increases the channel-mediated whole cell currents and promotes plasma membrane expression of KCNK2. Interacts with anthrax lethal factor (LF); this interaction may facilitate endosomal vesicle membrane translocation of LF and its release from the lumen of endosomal vesicles to external milieu. Interacts with STX17. Interacts with TMEM115. Interacts with TMEM41B.

Its subcellular location is the cytoplasm. It localises to the golgi apparatus membrane. The protein resides in the cytoplasmic vesicle. The protein localises to the COPI-coated vesicle membrane. It is found in the cell membrane. Its subcellular location is the endoplasmic reticulum-Golgi intermediate compartment. In terms of biological role, the coatomer is a cytosolic protein complex that binds to dilysine motifs and reversibly associates with Golgi non-clathrin-coated vesicles, which further mediate biosynthetic protein transport from the ER, via the Golgi up to the trans Golgi network. Coatomer complex is required for budding from Golgi membranes, and is essential for the retrograde Golgi-to-ER transport of dilysine-tagged proteins. In mammals, the coatomer can only be recruited by membranes associated to ADP-ribosylation factors (ARFs), which are small GTP-binding proteins; the complex also influences the Golgi structural integrity, as well as the processing, activity, and endocytic recycling of LDL receptors. Plays a functional role in facilitating the transport of kappa-type opioid receptor mRNAs into axons and enhances translation of these proteins. Required for limiting lipid storage in lipid droplets. Involved in lipid homeostasis by regulating the presence of perilipin family members PLIN2 and PLIN3 at the lipid droplet surface and promoting the association of adipocyte surface triglyceride lipase (PNPLA2) with the lipid droplet to mediate lipolysis. Involved in the Golgi disassembly and reassembly processes during cell cycle. Involved in autophagy by playing a role in early endosome function. Plays a role in organellar compartmentalization of secretory compartments including endoplasmic reticulum (ER)-Golgi intermediate compartment (ERGIC), Golgi, trans-Golgi network (TGN) and recycling endosomes, and in biosynthetic transport of CAV1. Promotes degradation of Nef cellular targets CD4 and MHC class I antigens by facilitating their trafficking to degradative compartments. This Pongo abelii (Sumatran orangutan) protein is Coatomer subunit beta (COPB1).